Here is a 212-residue protein sequence, read N- to C-terminus: Urease accessory protein UreG (212 aa).

11–18 (GPVGSGKT) lines the GTP pocket.

It belongs to the SIMIBI class G3E GTPase family. UreG subfamily. Homodimer. UreD, UreF and UreG form a complex that acts as a GTP-hydrolysis-dependent molecular chaperone, activating the urease apoprotein by helping to assemble the nickel containing metallocenter of UreC. The UreE protein probably delivers the nickel.

It localises to the cytoplasm. Its function is as follows. Facilitates the functional incorporation of the urease nickel metallocenter. This process requires GTP hydrolysis, probably effectuated by UreG. The sequence is that of Urease accessory protein UreG from Trichodesmium erythraeum (strain IMS101).